Consider the following 215-residue polypeptide: MANVYDWFEERLEIQALAEDVTSKYVPPHVNIFYCLGGITLVCFLIQFATGFAMTFYYRPTVTEAFSSVEYIMNEVNFGWLIRSIHRWSASMMVLMMILHVFRVYLTGGFKKPRELTWVSGVILAVITVSFGVTGYSLPWDQVGYWAVKIVSGVPEAIPVVGVLISDLLRGGSSVGQATLTRYYSAHTFVLPWLIAVFMLFHFLMIRKQGISGPL.

Residues 32–52 (IFYCLGGITLVCFLIQFATGF) form a helical membrane-spanning segment. Cys-35 serves as a coordination point for heme c. Heme b is bound by residues His-86 and His-100. 3 helical membrane-spanning segments follow: residues 90–110 (ASMMVLMMILHVFRVYLTGGF), 116–136 (LTWVSGVILAVITVSFGVTGY), and 186–206 (AHTFVLPWLIAVFMLFHFLMI). The heme b site is built by His-187 and His-202.

The protein belongs to the cytochrome b family. PetB subfamily. The 4 large subunits of the cytochrome b6-f complex are cytochrome b6, subunit IV (17 kDa polypeptide, PetD), cytochrome f and the Rieske protein, while the 4 small subunits are PetG, PetL, PetM and PetN. The complex functions as a dimer. It depends on heme b as a cofactor. The cofactor is heme c.

It is found in the cellular thylakoid membrane. In terms of biological role, component of the cytochrome b6-f complex, which mediates electron transfer between photosystem II (PSII) and photosystem I (PSI), cyclic electron flow around PSI, and state transitions. In Nostoc punctiforme (strain ATCC 29133 / PCC 73102), this protein is Cytochrome b6.